The sequence spans 352 residues: Holliday junction branch migration complex subunit RuvB (352 aa).

The interval 4–185 (PDRLISAVSG…FGIVQRLEFY (182 aa)) is large ATPase domain (RuvB-L). ATP is bound by residues Ile-24, Arg-25, Gly-66, Lys-69, Thr-70, Thr-71, 132–134 (EDF), Arg-175, Tyr-185, and Arg-222. Position 70 (Thr-70) interacts with Mg(2+). The small ATPAse domain (RuvB-S) stretch occupies residues 186 to 256 (NVEDLATIVS…IADKALNLLD (71 aa)). The interval 259-352 (ERGFDHLDRR…SDLFTSEDGN (94 aa)) is head domain (RuvB-H). Arg-295, Arg-314, and Arg-319 together coordinate DNA.

This sequence belongs to the RuvB family. In terms of assembly, homohexamer. Forms an RuvA(8)-RuvB(12)-Holliday junction (HJ) complex. HJ DNA is sandwiched between 2 RuvA tetramers; dsDNA enters through RuvA and exits via RuvB. An RuvB hexamer assembles on each DNA strand where it exits the tetramer. Each RuvB hexamer is contacted by two RuvA subunits (via domain III) on 2 adjacent RuvB subunits; this complex drives branch migration. In the full resolvosome a probable DNA-RuvA(4)-RuvB(12)-RuvC(2) complex forms which resolves the HJ.

It is found in the cytoplasm. It carries out the reaction ATP + H2O = ADP + phosphate + H(+). In terms of biological role, the RuvA-RuvB-RuvC complex processes Holliday junction (HJ) DNA during genetic recombination and DNA repair, while the RuvA-RuvB complex plays an important role in the rescue of blocked DNA replication forks via replication fork reversal (RFR). RuvA specifically binds to HJ cruciform DNA, conferring on it an open structure. The RuvB hexamer acts as an ATP-dependent pump, pulling dsDNA into and through the RuvAB complex. RuvB forms 2 homohexamers on either side of HJ DNA bound by 1 or 2 RuvA tetramers; 4 subunits per hexamer contact DNA at a time. Coordinated motions by a converter formed by DNA-disengaged RuvB subunits stimulates ATP hydrolysis and nucleotide exchange. Immobilization of the converter enables RuvB to convert the ATP-contained energy into a lever motion, pulling 2 nucleotides of DNA out of the RuvA tetramer per ATP hydrolyzed, thus driving DNA branch migration. The RuvB motors rotate together with the DNA substrate, which together with the progressing nucleotide cycle form the mechanistic basis for DNA recombination by continuous HJ branch migration. Branch migration allows RuvC to scan DNA until it finds its consensus sequence, where it cleaves and resolves cruciform DNA. The polypeptide is Holliday junction branch migration complex subunit RuvB (Pseudomonas paraeruginosa (strain DSM 24068 / PA7) (Pseudomonas aeruginosa (strain PA7))).